The following is a 246-amino-acid chain: Exosome complex component Rrp41 (246 aa).

The protein belongs to the RNase PH family. Rrp41 subfamily. In terms of assembly, component of the archaeal exosome complex. Forms a hexameric ring-like arrangement composed of 3 Rrp41-Rrp42 heterodimers. The hexameric ring associates with a trimer of Rrp4 and/or Csl4 subunits.

Its subcellular location is the cytoplasm. Functionally, catalytic component of the exosome, which is a complex involved in RNA degradation. Has 3'-&gt;5' exoribonuclease activity. Can also synthesize heteromeric RNA-tails. The protein is Exosome complex component Rrp41 of Pyrobaculum calidifontis (strain DSM 21063 / JCM 11548 / VA1).